The chain runs to 362 residues: Chorismate synthase (362 aa).

Arginine 47 contacts NADP(+). Residues 124-126 (RSS), glycine 286, 301-305 (KPTAT), and arginine 327 each bind FMN.

It belongs to the chorismate synthase family. Homotetramer. FMNH2 serves as cofactor.

It carries out the reaction 5-O-(1-carboxyvinyl)-3-phosphoshikimate = chorismate + phosphate. It participates in metabolic intermediate biosynthesis; chorismate biosynthesis; chorismate from D-erythrose 4-phosphate and phosphoenolpyruvate: step 7/7. Its function is as follows. Catalyzes the anti-1,4-elimination of the C-3 phosphate and the C-6 proR hydrogen from 5-enolpyruvylshikimate-3-phosphate (EPSP) to yield chorismate, which is the branch point compound that serves as the starting substrate for the three terminal pathways of aromatic amino acid biosynthesis. This reaction introduces a second double bond into the aromatic ring system. This Synechocystis sp. (strain ATCC 27184 / PCC 6803 / Kazusa) protein is Chorismate synthase.